The chain runs to 170 residues: UPF0260 protein RPC_1790 (170 aa).

It belongs to the UPF0260 family.

The sequence is that of UPF0260 protein RPC_1790 from Rhodopseudomonas palustris (strain BisB18).